Consider the following 236-residue polypeptide: 1-(5-phosphoribosyl)-5-[(5-phosphoribosylamino)methylideneamino] imidazole-4-carboxamide isomerase (236 aa).

Residue Asp8 is the Proton acceptor of the active site. The active-site Proton donor is Asp129.

It belongs to the HisA/HisF family.

It is found in the cytoplasm. The enzyme catalyses 1-(5-phospho-beta-D-ribosyl)-5-[(5-phospho-beta-D-ribosylamino)methylideneamino]imidazole-4-carboxamide = 5-[(5-phospho-1-deoxy-D-ribulos-1-ylimino)methylamino]-1-(5-phospho-beta-D-ribosyl)imidazole-4-carboxamide. The protein operates within amino-acid biosynthesis; L-histidine biosynthesis; L-histidine from 5-phospho-alpha-D-ribose 1-diphosphate: step 4/9. The sequence is that of 1-(5-phosphoribosyl)-5-[(5-phosphoribosylamino)methylideneamino] imidazole-4-carboxamide isomerase from Ruminiclostridium cellulolyticum (strain ATCC 35319 / DSM 5812 / JCM 6584 / H10) (Clostridium cellulolyticum).